Reading from the N-terminus, the 422-residue chain is Ribonuclease Y (422 aa).

Positions 112–172 constitute a KH domain; the sequence is TTNIVKLPSD…IRREIATRTL (61 aa). The region spanning 238-331 is the HD domain; it reads VLAHSIEVAK…VAIADSISAS (94 aa).

It belongs to the RNase Y family.

Endoribonuclease that initiates mRNA decay. The chain is Ribonuclease Y from Mycoplasma mycoides.